The primary structure comprises 64 residues: Movement protein TGBp3 (64 aa).

Over 1 to 4 (MRSV) the chain is Lumenal. The helical transmembrane segment at 5–27 (ALTLCAIIAGYLLVSNLQNVFSP) threads the bilayer. Topologically, residues 28-64 (EVCTLVITGESIRINGCNLSPAHFRAISHLKVLQIHL) are cytoplasmic.

This sequence belongs to the Tymovirales TGBp3 protein family.

Its subcellular location is the host endoplasmic reticulum membrane. In terms of biological role, plays a role in viral cell-to-cell propagation, by facilitating genome transport to neighboring plant cells through plasmosdesmata. May induce the formation of granular vesicles derived from the Endoplasmic reticulum, which align on actin filaments. This chain is Movement protein TGBp3, found in Lily symptomless virus (LSV).